Reading from the N-terminus, the 322-residue chain is Glutamyl-Q tRNA(Asp) synthetase (322 aa).

Residues 28–32 and glutamate 64 each bind L-glutamate; that span reads RFAPS. Positions 31 to 41 match the 'HIGH' region motif; that stretch reads PSPSGDLHFGS. Positions 120, 122, 134, and 138 each coordinate Zn(2+). Residues tyrosine 191 and arginine 209 each coordinate L-glutamate. The 'KMSKS' region signature appears at 247–251; the sequence is KLSKQ. Lysine 250 is a binding site for ATP.

It belongs to the class-I aminoacyl-tRNA synthetase family. GluQ subfamily. Requires Zn(2+) as cofactor.

Its function is as follows. Catalyzes the tRNA-independent activation of glutamate in presence of ATP and the subsequent transfer of glutamate onto a tRNA(Asp). Glutamate is transferred on the 2-amino-5-(4,5-dihydroxy-2-cyclopenten-1-yl) moiety of the queuosine in the wobble position of the QUC anticodon. The protein is Glutamyl-Q tRNA(Asp) synthetase of Pectobacterium atrosepticum (strain SCRI 1043 / ATCC BAA-672) (Erwinia carotovora subsp. atroseptica).